A 494-amino-acid chain; its full sequence is Autocrine proliferation repressor protein A (494 aa).

The signal sequence occupies residues Met1–Ser18. N-linked (GlcNAc...) asparagine glycans are attached at residues Asn37, Asn153, and Asn302.

This sequence belongs to the pqaA family. As to quaternary structure, interacts with cfaD.

It localises to the secreted. Its function is as follows. Inhibitor that slows proliferation of secreting cells (also known as chalone). May function by binding to cell surface receptors. Requires cfaD for activity. Overexpression slows proliferation. The polypeptide is Autocrine proliferation repressor protein A (aprA) (Dictyostelium discoideum (Social amoeba)).